We begin with the raw amino-acid sequence, 1641 residues long: MTESSMKKLASTLLDAITDKDPLVQEQVCSALCSLGEARPVETLRACEEYLRQHDKLAHPYRAAVLRAMERVLSSRASELDKDTASTIILLASSEMTKTKDLVWDWQQAASGVLVAVGRQFISKVMEELLRRLHPGTLPHCAVLHTLASLSVANAFGVVPFLPSVLSSLLPVLGVAKQDTVRVAFCSALQRFSEGALEYLANLDRAPDPTVRKDAFATDIFSAYDVLFHQWLQSREAKLRLAVVEALGPMSHLLPSERLEEQLPKLLPGILALYKKHAETFYLSKSLGQILEAAVSVGSRTLETQLDALLAALHSQICVPVESSSPLVMSNQKEVLRCFTVLACSSPDRLLAFLLPRLDTSNERTRVGTLQVVRHVINSAAAQMEDKKPFILSSMRLPLLDTNSKVKRAVVQVISAMAHHGYLEQPGGEAMIEYIVQQCALPPEQEPEKPGPGSKDPKADSVRAISVRTLYLVSTTVDRMSHVLWPYLLQFLTPVRFTGALTPLCRSLVHLAQKRQEAGADAFLIQYDAHASLPSPYAVTGRLLVVSSSPYLGDGRGAAALRLLSVLHPNIHPLLGQHWETTVPLLLGYLDEHTEETLPQEEWEEKLLMFLRDTLAIISDNAWICQLSLELCRQLPCYDEAPQEKNFLYKCIGTTLGAASSKEVVRKHLQELLETARYQEEAEREGLACCFGICAISHLEDTLAQLEDFVRSEVFRKSIGILNIFKDRSENEVEKVKSALILCYGHVAARAPRELVLAKVESDILRNICQHFSTKVLGIKVETKDPALKLCLVQSVCMVSRAICSSTQAGSFHFTRKAELVAQMMEFIRAEPPDSLRTPIRKKAMLTCTYLVSVEPALDEQARADVIHGCLHSIMALLPEPKEEDGGCQKSLYLETLHALEDLLTSLLQRNMTPQGLQIMIEHLSPWIKSPRGHERARALGLSALLLRYFLEHLRVSALVPFHNLGLLIGLFSPRCADLWPATRQEAVDCVYSLLYLQLGYEGFSRDYRDDVAERLLSLKDGLVHPDPAILFHTCHSVGQIIAKRLPPDQLISLLLTMFEALGDPEKNCSRAATVMINCLLQERGGVLQEKVPEIVSVLRSKLQEAQGEHVLPAAQHSVYLLATQHCAAVVSSLLGSPLPLDSHTCMLWRALAVEPRLAAQVLGLLLEKMSRDVPFKESRAFLLGRTPDRVATLLPLSATCALFEVMSTPAAGPAVLELYPQLFVVLLLRVSCTVGVQLPRNLQAQERRGASPALATRNLEPCSSAVDTLRSMLLRSGSEDVVQRMDLEGGWELLRTSAGHEEGATRLARAMAEHAGPRLPLVLKTLACTHSSAYENQRVTTTAFLAELLNSNVANDLMLLDSLLESLAARQKDTCASVRRLVLRGLANLASGCPDKVRTHGPQLLTAMIGGLDDGDNPHSPVALEAMLGLARLVHLVESWDLRSGLLHVAIRIRPFFDSEKMEFRTASIRLFGHLNKVCHGDCEDVFLDQVVGGLAPLLLHLQDPQATVASACRFALRMCGPNLACEELSAAFQKHLQEGRALHFGEFLNTTCKHLMHHFPDLLGRLLTTCLFYFKSSWENVRAAAPLFTGFLVLHSEPRQQPQVDLDQLIAALQILLKDPAPEVRTRAAEALGRLVKLA.

7 HEAT repeats span residues glutamate 3–valine 41, valine 159–glutamate 198, cysteine 344–alanine 382, glutamate 385–leucine 423, proline 1048–glycine 1086, leucine 1358–aspartate 1396, and glutamine 1605–alanine 1641.

The protein belongs to the MROH1 family. In terms of assembly, homooligomer; homooligomerizes at lysosome scission sites.

It localises to the lysosome membrane. Its function is as follows. Lysosome fission factor. Recruited to lysosomes by RAB7 (RAB7A or RAB7B) at scission sites and homooligomerizes to mediate the constriction and scission of lysosomal tubules. May sever membranes by inserting amphipathic helices into one bilayer leaflet. Lysosome fission is required to maintain their steady-state number, shape, size, composition and function, and to accomplish regeneration. The sequence is that of Maestro heat-like repeat-containing protein family member 1 from Homo sapiens (Human).